Reading from the N-terminus, the 78-residue chain is HssA/B-like protein 30 (78 aa).

A disordered region spans residues 1–32 (MTLFSSITSISKTNTSSKSSVNSLSGSSLSMG).

This sequence belongs to the hssA/B family.

This Dictyostelium discoideum (Social amoeba) protein is HssA/B-like protein 30 (hssl30).